We begin with the raw amino-acid sequence, 400 residues long: uncharacterized protein (400 aa).

This sequence to M.jannaschii MJ1544 and MJ1637.

This is an uncharacterized protein from Haemophilus influenzae (strain ATCC 51907 / DSM 11121 / KW20 / Rd).